A 556-amino-acid chain; its full sequence is MTPEELSSAVSACLQDAVAAGELTVVDGVDLPEAKVERPKNRDHGDWATTVAMQVAKKVGRSPRDVAQILSERLARVPGVKTVDIAGPGFLNITLDAAAAGGLAQSVVEQGSAFGTGDALAGTTINLEFVSANPTGPIHLGGTRWAAVGDSLARVLQAQGAEVVREYYFNDHGNQIDRFARSLLARARGEAAPEDGYGGQYISDVAQEVLALHPDALESEDPQEVFRAAGVELMFAQIKSSLHEFGVDFDVFFHENSLFEDGQVEKLLEQLRSSDSLYFADGAWWLRSTEHGDDKDRVVIKSDGNAAYIAGDIAYFKNKRDRGADLCIYMLGADHHGYVARLKAAAAALGDSPDAVEVLIGQMVNLVRDGEAVRMSKRAGTVVTMEDLVEVVGVDAARYSLTRYSVDSNIDIDLDVLTRRSNENPVFYVQYAHARTCAVARNAEAAGVRRTDDAGAPQFDAALLSHPREADLLAALGQYPSVVAQAADFREPHRVARHLEALAGAYHRWYDACRVTPQGDGEVELVHHTRLWLNDAVRQVLANGLDLLGVSAPERM.

The 'HIGH' region motif lies at 132 to 142 (ANPTGPIHLGG).

This sequence belongs to the class-I aminoacyl-tRNA synthetase family. Monomer.

The protein localises to the cytoplasm. The catalysed reaction is tRNA(Arg) + L-arginine + ATP = L-arginyl-tRNA(Arg) + AMP + diphosphate. This is Arginine--tRNA ligase from Kocuria rhizophila (strain ATCC 9341 / DSM 348 / NBRC 103217 / DC2201).